The sequence spans 637 residues: MSQQETHGFQTEVKQLLHLMIHSLYSNKEIFLRELVSNAADAADKLRYLALTNDALYEGDGELRVRISADKEKGTVTIEDNGVGMTRDGVIEHLGTIAKSGTADFFKNLSGESSKDSQLIGQFGVGFYSAFIVAKKVTVRTRAAGHKADEAVLWESEGEGNFTVDTITKASRGTEITLHLRDEEKEFADDWRLRSIITKYSDHISVPVEMWQEGTPESDGADGEKIPATEGQWKVMNKATALWMRSKADISDEEYQEFYKHISHDYTDALLWSHNRVEGKQEYTNLLYIPAKAPWDMWNRDRKHGLKLFVQRVFIMDDAEQFMPSYLRFVQGLIDSNDLPLNVSREILQDNHVTKAMRTGITKRVLGMLEKLAKDDAEKYQQFWAEFGQVLKEGPAEDFANRERIAGLLRFASTHTGSAAPTVSLDDYISRMKEGQTKIYYIVADSHEAAANSPHLELLRKKGIEVLLMSERIDEWLINHLTEYKEKQLHSVTRGDLELGELEDAAEKEAQEKLEQESVALVERIKAALGSSVADVKVTSRLTDTPACVVAGDGEMSTQMIKLMQAAGQPVPEVKPTFEINPAHPLVSRLNDLQDETAFADWSNLLLQQAQLSEKGSLADPSAFIKLMNQMLLANMK.

Residues 1-345 (MSQQETHGFQ…SNDLPLNVSR (345 aa)) are a; substrate-binding. The b stretch occupies residues 346-562 (EILQDNHVTK…DGEMSTQMIK (217 aa)). Residues 563–637 (LMQAAGQPVP…MNQMLLANMK (75 aa)) form a c region.

This sequence belongs to the heat shock protein 90 family. As to quaternary structure, homodimer.

It localises to the cytoplasm. In terms of biological role, molecular chaperone. Has ATPase activity. The polypeptide is Chaperone protein HtpG (Shewanella baltica (strain OS155 / ATCC BAA-1091)).